Reading from the N-terminus, the 151-residue chain is Cytochrome c-type biogenesis protein CcmE (151 aa).

Residues Met-1–Arg-8 lie on the Cytoplasmic side of the membrane. Residues Leu-9–Ala-29 form a helical; Signal-anchor for type II membrane protein membrane-spanning segment. At Leu-30–Gly-151 the chain is on the periplasmic side. The heme site is built by His-124 and Tyr-128.

The protein belongs to the CcmE/CycJ family.

The protein localises to the cell inner membrane. Its function is as follows. Heme chaperone required for the biogenesis of c-type cytochromes. Transiently binds heme delivered by CcmC and transfers the heme to apo-cytochromes in a process facilitated by CcmF and CcmH. The protein is Cytochrome c-type biogenesis protein CcmE of Pseudomonas fluorescens (strain SBW25).